The sequence spans 64 residues: Large ribosomal subunit protein bL35 (64 aa).

Residues Met1 to Ile22 are compositionally biased toward basic residues. A disordered region spans residues Met1–Thr39.

The protein belongs to the bacterial ribosomal protein bL35 family.

The protein is Large ribosomal subunit protein bL35 of Salinispora arenicola (strain CNS-205).